The chain runs to 262 residues: Pyridoxine 5'-phosphate synthase (262 aa).

A 3-amino-2-oxopropyl phosphate-binding site is contributed by Asn-6. 1-deoxy-D-xylulose 5-phosphate is bound at residue 8 to 9; sequence DH. A 3-amino-2-oxopropyl phosphate-binding site is contributed by Arg-17. His-42 (proton acceptor) is an active-site residue. Arg-44 and His-49 together coordinate 1-deoxy-D-xylulose 5-phosphate. Glu-69 (proton acceptor) is an active-site residue. Thr-99 contacts 1-deoxy-D-xylulose 5-phosphate. Catalysis depends on His-213, which acts as the Proton donor. 3-amino-2-oxopropyl phosphate-binding positions include Gly-214 and 235 to 236; that span reads GH.

It belongs to the PNP synthase family. As to quaternary structure, homooctamer; tetramer of dimers.

The protein localises to the cytoplasm. It carries out the reaction 3-amino-2-oxopropyl phosphate + 1-deoxy-D-xylulose 5-phosphate = pyridoxine 5'-phosphate + phosphate + 2 H2O + H(+). It functions in the pathway cofactor biosynthesis; pyridoxine 5'-phosphate biosynthesis; pyridoxine 5'-phosphate from D-erythrose 4-phosphate: step 5/5. Catalyzes the complicated ring closure reaction between the two acyclic compounds 1-deoxy-D-xylulose-5-phosphate (DXP) and 3-amino-2-oxopropyl phosphate (1-amino-acetone-3-phosphate or AAP) to form pyridoxine 5'-phosphate (PNP) and inorganic phosphate. The sequence is that of Pyridoxine 5'-phosphate synthase from Wolinella succinogenes (strain ATCC 29543 / DSM 1740 / CCUG 13145 / JCM 31913 / LMG 7466 / NCTC 11488 / FDC 602W) (Vibrio succinogenes).